The following is a 169-amino-acid chain: Endoribonuclease YbeY (169 aa).

Residues H126, H130, and H136 each contribute to the Zn(2+) site.

This sequence belongs to the endoribonuclease YbeY family. The cofactor is Zn(2+).

It localises to the cytoplasm. Its function is as follows. Single strand-specific metallo-endoribonuclease involved in late-stage 70S ribosome quality control and in maturation of the 3' terminus of the 16S rRNA. This is Endoribonuclease YbeY from Bradyrhizobium sp. (strain BTAi1 / ATCC BAA-1182).